A 910-amino-acid chain; its full sequence is Seizure 6-like protein 2 (910 aa).

An N-terminal signal peptide occupies residues M1–G27. At L28–N844 the chain is on the extracellular side. Positions P70–E152 are disordered. A compositionally biased stretch (pro residues) spans L123–R145. Residues C173 and C202 are joined by a disulfide bond. Residues C173–Y286 enclose the CUB 1 domain. N222 carries N-linked (GlcNAc...) asparagine glycosylation. The Sushi 1 domain maps to L288 to A347. Cystine bridges form between C290/C330, C316/C345, C349/C376, C464/C508, C491/C523, C527/C553, C644/C686, C672/C699, C705/C747, C733/C764, C771/C813, and C799/C828. Residues N332, N373, N473, and N517 are each glycosylated (N-linked (GlcNAc...) asparagine). The CUB 2 domain maps to C349–F459. A Sushi 2 domain is found at D462–A525. The 112-residue stretch at C527–V638 folds into the CUB 3 domain. Sushi domains lie at D642–K701, M703–L766, and E769–V830. The helical transmembrane segment at L845–I865 threads the bilayer. Over Y866–I910 the chain is Cytoplasmic.

It belongs to the SEZ6 family. As to expression, expressed exclusively in the brain, predominantly in the neurons. Wide expression in the gray matter of the brain with high levels in the olfactory bulb, anterior olfactory nuclei, hippocampal formation and cerebellar cortex. Detected diffusely and weakly in the white matter, such as the corpus callosum and cerebellar medulla. In the cerebellar cortex, intensely expressed in Purkinje cells (PC) and granule cells. Detected also in interneurons in the molecular layer. Up-regulated at two weeks after birth.

It localises to the cell membrane. Its subcellular location is the endoplasmic reticulum membrane. In terms of biological role, may contribute to specialized endoplasmic reticulum functions in neurons. This is Seizure 6-like protein 2 (Sez6l2) from Mus musculus (Mouse).